A 103-amino-acid chain; its full sequence is Large ribosomal subunit protein uL24 (103 aa).

The protein belongs to the universal ribosomal protein uL24 family. As to quaternary structure, part of the 50S ribosomal subunit.

In terms of biological role, one of two assembly initiator proteins, it binds directly to the 5'-end of the 23S rRNA, where it nucleates assembly of the 50S subunit. One of the proteins that surrounds the polypeptide exit tunnel on the outside of the subunit. This Pasteurella multocida (strain Pm70) protein is Large ribosomal subunit protein uL24.